Here is a 379-residue protein sequence, read N- to C-terminus: Probable pectin lyase B (379 aa).

The signal sequence occupies residues 1 to 20; sequence MHYKLLFAAAAASLASAVSA. Intrachain disulfides connect Cys-83–Cys-102 and Cys-92–Cys-226. Residues Asn-129 and Asn-252 are each glycosylated (N-linked (GlcNAc...) asparagine). The active site involves Arg-256. Cys-323 and Cys-331 are joined by a disulfide.

This sequence belongs to the polysaccharide lyase 1 family.

The protein localises to the secreted. It catalyses the reaction Eliminative cleavage of (1-&gt;4)-alpha-D-galacturonan methyl ester to give oligosaccharides with 4-deoxy-6-O-methyl-alpha-D-galact-4-enuronosyl groups at their non-reducing ends.. In terms of biological role, pectinolytic enzymes consist of four classes of enzymes: pectin lyase, polygalacturonase, pectin methylesterase and rhamnogalacturonase. Among pectinolytic enzymes, pectin lyase is the most important in depolymerization of pectin, since it cleaves internal glycosidic bonds of highly methylated pectins. In Aspergillus niger (strain ATCC MYA-4892 / CBS 513.88 / FGSC A1513), this protein is Probable pectin lyase B (pelB).